Reading from the N-terminus, the 134-residue chain is Ribonuclease VapC1 (134 aa).

Residues 3 to 132 enclose the PINc domain; sequence YMLDTNIIIY…RITDLQWQDW (130 aa). Positions 6 and 99 each coordinate Mg(2+).

The protein belongs to the PINc/VapC protein family. Mg(2+) is required as a cofactor.

In terms of biological role, toxic component of a type II toxin-antitoxin (TA) system. Acts as an RNase, its toxic effect is neutralized by VapB1 antitoxin. The chain is Ribonuclease VapC1 from Haemophilus influenzae (strain ATCC 51907 / DSM 11121 / KW20 / Rd).